A 322-amino-acid polypeptide reads, in one-letter code: Protein lin-56 (322 aa).

A disordered region spans residues 264-322 (SSQKLQQNGFPEKVEQMDKYSNKLKDEASDKKYEKPGKKDYVEEEGYWAPITDSEDDEA). The segment covering 275–304 (EKVEQMDKYSNKLKDEASDKKYEKPGKKDY) has biased composition (basic and acidic residues).

As to expression, widely expressed throughout embryonic development. Expressed in the six multipotent ventral ectodermal blast cells, P3.p-P8.p, which generate the vulva and in their descendants throughout vulval development.

The protein resides in the nucleus. Its function is as follows. Required for translation, stability and/or localization of lin-15a. This is Protein lin-56 (lin-56) from Caenorhabditis elegans.